A 312-amino-acid chain; its full sequence is MEIKNCSVVTEFILLGIPHTEGFETLLFVLFLPFYACTLVGNVSILVAVISSTRLHTPMYFFLGNLSVFDMGFSSVTCPKMLFYLMGLSRLISYQDCVSQLFFFHFLGSIECFLYTVMAYDRFAAICHPLRYSVIMNSKICVALAVGTWLLGCFHSSVLTSLTFTLPYCGPNEVDHFFCDIPAILPLASADTSLAQRVSFTNVGLVSLVCFLLILLSYTRITISILSIQSTEGRQRAFSTCSAHLIAILCAYGPIITIYLQPTPNPMLGTVVQILMNLVGPMLNPLIYTLRNKEVKIALKKILHGKGSVSEG.

The Extracellular segment spans residues 1–26 (MEIKNCSVVTEFILLGIPHTEGFETL). Asparagine 5 carries an N-linked (GlcNAc...) asparagine glycan. A helical membrane pass occupies residues 27–47 (LFVLFLPFYACTLVGNVSILV). At 48-57 (AVISSTRLHT) the chain is on the cytoplasmic side. The chain crosses the membrane as a helical span at residues 58–78 (PMYFFLGNLSVFDMGFSSVTC). Over 79–97 (PKMLFYLMGLSRLISYQDC) the chain is Extracellular. Cysteines 97 and 179 form a disulfide. The chain crosses the membrane as a helical span at residues 98–118 (VSQLFFFHFLGSIECFLYTVM). Over 119–139 (AYDRFAAICHPLRYSVIMNSK) the chain is Cytoplasmic. A helical membrane pass occupies residues 140 to 160 (ICVALAVGTWLLGCFHSSVLT). Residues 161-197 (SLTFTLPYCGPNEVDHFFCDIPAILPLASADTSLAQR) are Extracellular-facing. A helical membrane pass occupies residues 198-218 (VSFTNVGLVSLVCFLLILLSY). Residues 219–239 (TRITISILSIQSTEGRQRAFS) are Cytoplasmic-facing. Residues 240-260 (TCSAHLIAILCAYGPIITIYL) form a helical membrane-spanning segment. Over 261–266 (QPTPNP) the chain is Extracellular. The helical transmembrane segment at 267 to 287 (MLGTVVQILMNLVGPMLNPLI) threads the bilayer. Over 288–312 (YTLRNKEVKIALKKILHGKGSVSEG) the chain is Cytoplasmic.

The protein belongs to the G-protein coupled receptor 1 family.

Its subcellular location is the cell membrane. Potential odorant receptor. This is Olfactory receptor 10D3 from Mus musculus (Mouse).